A 385-amino-acid polypeptide reads, in one-letter code: 8-amino-7-oxononanoate synthase (385 aa).

R21 provides a ligand contact to substrate. 108–109 (GF) serves as a coordination point for pyridoxal 5'-phosphate. A substrate-binding site is contributed by H133. Pyridoxal 5'-phosphate is bound by residues S179, H207, and T233. An N6-(pyridoxal phosphate)lysine modification is found at K236. A substrate-binding site is contributed by T352.

Belongs to the class-II pyridoxal-phosphate-dependent aminotransferase family. BioF subfamily. Homodimer. Pyridoxal 5'-phosphate is required as a cofactor.

The enzyme catalyses 6-carboxyhexanoyl-[ACP] + L-alanine + H(+) = (8S)-8-amino-7-oxononanoate + holo-[ACP] + CO2. It participates in cofactor biosynthesis; biotin biosynthesis. Catalyzes the decarboxylative condensation of pimeloyl-[acyl-carrier protein] and L-alanine to produce 8-amino-7-oxononanoate (AON), [acyl-carrier protein], and carbon dioxide. This chain is 8-amino-7-oxononanoate synthase, found in Salmonella arizonae (strain ATCC BAA-731 / CDC346-86 / RSK2980).